Reading from the N-terminus, the 1350-residue chain is Nidogen (1350 aa).

An N-terminal signal peptide occupies residues 1–22 (MPTFGSKLLACLLLSSVILVSG). The region spanning 107-260 (AFYSNVDTSF…GVWLFEVAPI (154 aa)) is the NIDO domain. N-linked (GlcNAc...) asparagine glycosylation occurs at Asn231. An EGF-like 1 domain is found at 281–321 (LALSCQAHAHQCHEKAECHDKAEGYCCVCGSGFYGNGKSCL). 3 cysteine pairs are disulfide-bonded: Cys285–Cys298, Cys292–Cys307, and Cys309–Cys320. Positions 325–550 (QPIRVTGTLT…GVTPESNACN (226 aa)) constitute a Nidogen G2 beta-barrel domain. Residues Asn423 and Asn480 are each glycosylated (N-linked (GlcNAc...) asparagine). One can recognise an EGF-like 2 domain in the interval 545–583 (ESNACNDGTADCVENSVCVPYEDTYRCDCYHGFAAQLDE). 5 cysteine pairs are disulfide-bonded: Cys549-Cys562, Cys556-Cys571, Cys595-Cys608, Cys602-Cys617, and Cys619-Cys630. The region spanning 591 to 631 (DIDECATGSHVCDENAVCDNTEGGFNCYCTEGFEGNGYRCL) is the EGF-like 3; calcium-binding domain. N-linked (GlcNAc...) asparagine glycosylation occurs at Asn633. The segment at 645–691 (VEGQAEPTSEPSPNPSPYPDQGQDQEREREDDQYPQPNPYPYPEEQI) is disordered. 5 consecutive EGF-like domains span residues 788 to 829 (DLIP…YNCD), 832 to 874 (SDDS…FNCQ), 912 to 953 (PAGR…TGCT), 955 to 996 (KPLS…YVCI), and 997 to 1037 (EEQN…SLCQ). Cystine bridges form between Cys792/Cys804, Cys798/Cys815, Cys817/Cys828, Cys836/Cys849, Cys843/Cys860, Cys862/Cys873, Cys916/Cys927, Cys921/Cys938, Cys940/Cys952, Cys959/Cys971, Cys965/Cys982, Cys984/Cys995, Cys1001/Cys1014, Cys1008/Cys1023, and Cys1025/Cys1036. Asn801 is a glycosylation site (N-linked (GlcNAc...) asparagine). Asn1032 is a glycosylation site (N-linked (GlcNAc...) asparagine). LDL-receptor class B repeat units follow at residues 1084–1126 (GRVY…DVIS), 1127–1170 (RRLY…DPYR), 1171–1216 (EKLF…LENS), and 1257–1282 (DQFY…QTPI).

In terms of tissue distribution, expressed in the basement membrane around the follicular epithelium of the adult ovary (at protein level).

Its subcellular location is the secreted. The protein localises to the extracellular space. The protein resides in the extracellular matrix. It localises to the basement membrane. Cell adhesion glycoprotein which is widely distributed in basement membranes. Involved in cell-extracellular matrix (ECM) interactions probably by connecting the laminin and collagen IV networks. Required for permeability and mechanical stability of basement membranes, and ECM dependent neural plasticity. Not involved in assembly of the embryonic basement membrane. The polypeptide is Nidogen (Drosophila melanogaster (Fruit fly)).